Reading from the N-terminus, the 467-residue chain is UDP-N-acetylmuramate--L-alanine ligase (467 aa).

Residue 112-118 (GTHGKTT) coordinates ATP.

This sequence belongs to the MurCDEF family.

It is found in the cytoplasm. The enzyme catalyses UDP-N-acetyl-alpha-D-muramate + L-alanine + ATP = UDP-N-acetyl-alpha-D-muramoyl-L-alanine + ADP + phosphate + H(+). It functions in the pathway cell wall biogenesis; peptidoglycan biosynthesis. Functionally, cell wall formation. The polypeptide is UDP-N-acetylmuramate--L-alanine ligase (Paraburkholderia xenovorans (strain LB400)).